A 971-amino-acid polypeptide reads, in one-letter code: Translation initiation factor IF-2 (971 aa).

Basic and acidic residues predominate over residues 49-63 (HLRKSHGATDGDKRK). 2 disordered regions span residues 49-85 (HLRKSHGATDGDKRKITLTRKHTSEIKQSDATGKART) and 99-386 (RDDV…PTEP). Residues 105–114 (GAEQGQAQVA) are compositionally biased toward low complexity. Residues 121 to 181 (ELKRREEEAR…EEEAAAKRAA (61 aa)) are compositionally biased toward basic and acidic residues. Residues 182-200 (AEAAAAQQAAAQQAAAEQE) show a composition bias toward low complexity. Residues 209-260 (DEARAAAERAAQREAAKKAEDAAREAADKARAEQEEISKRRAAAEAEARAIR) show a composition bias toward basic and acidic residues. The segment covering 303–325 (ARPAVKKPAGAAAPATTQAPAGA) has biased composition (low complexity). Gly residues predominate over residues 355-368 (SSGGVDRGWRGGPK). The tr-type G domain maps to 471–640 (PRPPVVTVMG…LLQAEVLELK (170 aa)). Residues 480 to 487 (GHVDHGKT) form a G1 region. Position 480-487 (480-487 (GHVDHGKT)) interacts with GTP. The interval 505–509 (GITQH) is G2. Positions 526-529 (DTPG) are G3. Residues 526–530 (DTPGH) and 580–583 (NKID) contribute to the GTP site. Residues 580–583 (NKID) form a G4 region. The tract at residues 616–618 (SAK) is G5.

The protein belongs to the TRAFAC class translation factor GTPase superfamily. Classic translation factor GTPase family. IF-2 subfamily.

The protein resides in the cytoplasm. One of the essential components for the initiation of protein synthesis. Protects formylmethionyl-tRNA from spontaneous hydrolysis and promotes its binding to the 30S ribosomal subunits. Also involved in the hydrolysis of GTP during the formation of the 70S ribosomal complex. In Burkholderia cenocepacia (strain ATCC BAA-245 / DSM 16553 / LMG 16656 / NCTC 13227 / J2315 / CF5610) (Burkholderia cepacia (strain J2315)), this protein is Translation initiation factor IF-2.